We begin with the raw amino-acid sequence, 243 residues long: tRNA (guanine-N(1)-)-methyltransferase (243 aa).

S-adenosyl-L-methionine contacts are provided by residues glycine 108 and 127-132 (LGDFVL).

The protein belongs to the RNA methyltransferase TrmD family. In terms of assembly, homodimer.

The protein resides in the cytoplasm. It carries out the reaction guanosine(37) in tRNA + S-adenosyl-L-methionine = N(1)-methylguanosine(37) in tRNA + S-adenosyl-L-homocysteine + H(+). Specifically methylates guanosine-37 in various tRNAs. The polypeptide is tRNA (guanine-N(1)-)-methyltransferase (Streptococcus pyogenes serotype M5 (strain Manfredo)).